Reading from the N-terminus, the 1220-residue chain is DNA-directed RNA polymerase subunit beta' (1220 aa).

Residues Cys-61, Cys-63, Cys-76, and Cys-79 each coordinate Zn(2+). Residues Asp-450, Asp-452, and Asp-454 each contribute to the Mg(2+) site. A disordered region spans residues Gln-1197–Asn-1220. Over residues Asp-1207 to Asn-1220 the composition is skewed to basic and acidic residues.

The protein belongs to the RNA polymerase beta' chain family. As to quaternary structure, the RNAP catalytic core consists of 2 alpha, 1 beta, 1 beta' and 1 omega subunit. When a sigma factor is associated with the core the holoenzyme is formed, which can initiate transcription. Mg(2+) serves as cofactor. Requires Zn(2+) as cofactor.

It catalyses the reaction RNA(n) + a ribonucleoside 5'-triphosphate = RNA(n+1) + diphosphate. Functionally, DNA-dependent RNA polymerase catalyzes the transcription of DNA into RNA using the four ribonucleoside triphosphates as substrates. In Leuconostoc mesenteroides subsp. mesenteroides (strain ATCC 8293 / DSM 20343 / BCRC 11652 / CCM 1803 / JCM 6124 / NCDO 523 / NBRC 100496 / NCIMB 8023 / NCTC 12954 / NRRL B-1118 / 37Y), this protein is DNA-directed RNA polymerase subunit beta'.